We begin with the raw amino-acid sequence, 498 residues long: ATP synthase subunit beta, chloroplastic (498 aa).

172-179 (GGAGVGKT) contacts ATP.

The protein belongs to the ATPase alpha/beta chains family. As to quaternary structure, F-type ATPases have 2 components, CF(1) - the catalytic core - and CF(0) - the membrane proton channel. CF(1) has five subunits: alpha(3), beta(3), gamma(1), delta(1), epsilon(1). CF(0) has four main subunits: a(1), b(1), b'(1) and c(9-12).

It is found in the plastid. It localises to the chloroplast thylakoid membrane. It carries out the reaction ATP + H2O + 4 H(+)(in) = ADP + phosphate + 5 H(+)(out). Produces ATP from ADP in the presence of a proton gradient across the membrane. The catalytic sites are hosted primarily by the beta subunits. This chain is ATP synthase subunit beta, chloroplastic, found in Agapanthus africanus (Lily of the Nile).